Reading from the N-terminus, the 399-residue chain is Zinc finger TRAF-type-containing protein 1 (399 aa).

The span at 1–13 (MSGAEEAGGGGPA) shows a compositional bias: gly residues. Residues 1-21 (MSGAEEAGGGGPAAGPAGAVP) are disordered. The RING-type; degenerate zinc finger occupies 106–151 (CTVCLDLPKASVYQCTNGHLMCAGCFIHLLADARLKEEQATCPNCR). A TRAF-type zinc finger spans residues 152–210 (CEISKSLCCRNLAVEKAVSELPSECGFCLRQFPRSLLERHQKEECQDRVTQCKYKRIGC).

This sequence belongs to the ZFTRAF1 family. In terms of assembly, interacts with LGALS3. Expressed in heart, brain, liver, testis and kidney.

Its subcellular location is the cytoplasm. It localises to the perinuclear region. This chain is Zinc finger TRAF-type-containing protein 1, found in Mus musculus (Mouse).